A 501-amino-acid chain; its full sequence is Dipeptide and tripeptide permease A (501 aa).

Topologically, residues methionine 1–arginine 34 are cytoplasmic. Residues phenylalanine 35–serine 55 form a helical membrane-spanning segment. Topologically, residues glutamate 56–serine 59 are periplasmic. A helical transmembrane segment spans residues isoleucine 60–leucine 80. Residues glycine 81–arginine 89 lie on the Cytoplasmic side of the membrane. A helical transmembrane segment spans residues valine 90–histidine 110. Aspartate 111 is a topological domain (periplasmic). A helical membrane pass occupies residues valine 112–asparagine 132. The Cytoplasmic segment spans residues proline 133–threonine 153. Residues methionine 154–alanine 174 form a helical membrane-spanning segment. Over alanine 175–glycine 178 the chain is Periplasmic. The helical transmembrane segment at tryptophan 179–phenylalanine 199 threads the bilayer. Over cysteine 200–histidine 217 the chain is Cytoplasmic. The chain crosses the membrane as a helical span at residues phenylalanine 218–leucine 238. Over leucine 239–arginine 246 the chain is Periplasmic. The chain crosses the membrane as a helical span at residues methionine 247–methionine 267. Topologically, residues glutamine 268 to lysine 274 are cytoplasmic. Residues methionine 275–methionine 295 form a helical membrane-spanning segment. Over proline 296–glutamine 320 the chain is Periplasmic. The chain crosses the membrane as a helical span at residues tyrosine 321 to asparagine 341. Residues lysine 342–lysine 352 lie on the Cytoplasmic side of the membrane. Residues phenylalanine 353–phenylalanine 373 form a helical membrane-spanning segment. Topologically, residues alanine 374–asparagine 383 are periplasmic. Residues tryptophan 384–leucine 404 traverse the membrane as a helical segment. Topologically, residues alanine 405 to arginine 414 are cytoplasmic. A helical membrane pass occupies residues leucine 415 to glycine 435. Residues tyrosine 436–arginine 459 lie on the Periplasmic side of the membrane. The helical transmembrane segment at valine 460 to proline 480 threads the bilayer. The Cytoplasmic segment spans residues lysine 481–alanine 501.

Belongs to the major facilitator superfamily. Proton-dependent oligopeptide transporter (POT/PTR) (TC 2.A.17) family. DtpA subfamily.

It is found in the cell inner membrane. Its function is as follows. Proton-dependent permease that transports di- and tripeptides. The polypeptide is Dipeptide and tripeptide permease A (Citrobacter koseri (strain ATCC BAA-895 / CDC 4225-83 / SGSC4696)).